A 166-amino-acid chain; its full sequence is NAD(P)H-quinone oxidoreductase subunit I, chloroplastic (166 aa).

2 4Fe-4S ferredoxin-type domains span residues 55 to 84 and 95 to 124; these read GRIH…VDWK and LNYS…MTEE. Residues cysteine 64, cysteine 67, cysteine 70, cysteine 74, cysteine 104, cysteine 107, cysteine 110, and cysteine 114 each coordinate [4Fe-4S] cluster.

It belongs to the complex I 23 kDa subunit family. In terms of assembly, NDH is composed of at least 16 different subunits, 5 of which are encoded in the nucleus. Requires [4Fe-4S] cluster as cofactor.

Its subcellular location is the plastid. The protein localises to the chloroplast thylakoid membrane. The catalysed reaction is a plastoquinone + NADH + (n+1) H(+)(in) = a plastoquinol + NAD(+) + n H(+)(out). The enzyme catalyses a plastoquinone + NADPH + (n+1) H(+)(in) = a plastoquinol + NADP(+) + n H(+)(out). NDH shuttles electrons from NAD(P)H:plastoquinone, via FMN and iron-sulfur (Fe-S) centers, to quinones in the photosynthetic chain and possibly in a chloroplast respiratory chain. The immediate electron acceptor for the enzyme in this species is believed to be plastoquinone. Couples the redox reaction to proton translocation, and thus conserves the redox energy in a proton gradient. This Sigesbeckia blakei protein is NAD(P)H-quinone oxidoreductase subunit I, chloroplastic.